A 207-amino-acid polypeptide reads, in one-letter code: Killer cell lectin-like receptor subfamily F member 2 (207 aa).

Topologically, residues 1-30 (MENEDGYMTLSFKNRCKSKQKSKDFSLYPQ) are cytoplasmic. Tyr7 carries the post-translational modification Phosphotyrosine. A helical; Signal-anchor for type II membrane protein transmembrane segment spans residues 31 to 51 (YYCLLLIFGCIVILIFIMTGI). At 52–207 (DLKFWHKKMD…ILTHNGTSGV (156 aa)) the chain is on the extracellular side. Residue Asn67 is glycosylated (N-linked (GlcNAc...) asparagine). Intrachain disulfides connect Cys78–Cys89, Cys106–Cys193, and Cys172–Cys185. In terms of domain architecture, C-type lectin spans 85-194 (NEGKCYWFST…CSSTFKGICQ (110 aa)). Asn202 carries an N-linked (GlcNAc...) asparagine glycan.

Homodimer; non-disulfide-linked. Interacts with CLEC2A. In terms of processing, N-glycosylated.

Its subcellular location is the cell membrane. Functionally, C-type lectin-like receptor involved in natural killer cell mediated cytotoxicity and cytokine secretion in keratinocytes via its interaction with CLEC2A. Triggers degranulation in a SYK-dependent manner and stimulates SYK phosphotyrosinylation without recruiting SYK directly. This chain is Killer cell lectin-like receptor subfamily F member 2 (KLRF2), found in Homo sapiens (Human).